An 868-amino-acid chain; its full sequence is Pro-neuregulin-2, membrane-bound isoform (868 aa).

The segment at 1–114 is disordered; the sequence is MRQVCCSALP…AAGGMRRDPA (114 aa). The propeptide occupies 1–127; that stretch reads MRQVCCSALP…SMLLFGVSLA (127 aa). The segment covering 19–75 has biased composition (low complexity); it reads SSYSYSDSSSSSSSNNSSSSTSSRSSSRSSSRSSRGSTTTTSSSENSGSNSGSIFRP. N-linked (GlcNAc...) asparagine glycans are attached at residues Asn-33 and Asn-34. Pro residues predominate over residues 76-90; sequence AAPPEPRPQPQPQPR. Over residues 91–108 the composition is skewed to low complexity; that stretch reads SPAARRAAARSRAAAAGG. Over 128–429 the chain is Extracellular; that stretch reads CYSPSLKSVQ…KEAEELYQKR (302 aa). N-linked (GlcNAc...) asparagine glycosylation is found at Asn-163, Asn-294, and Asn-362. Residues 253-348 form the Ig-like C2-type domain; the sequence is PKLKKMKSQT…RGRLHVNSVS (96 aa). 4 cysteine pairs are disulfide-bonded: Cys-273–Cys-327, Cys-361–Cys-375, Cys-369–Cys-386, and Cys-388–Cys-397. Residues 357-398 form the EGF-like domain; sequence HARKCNETAKSYCVNGGVCYYIEGINQLSCKCPNGFFGQRCL. Residues 430–450 form a helical membrane-spanning segment; sequence VLTITGICVALLVVGIVCVVA. Over 451 to 868 the chain is Cytoplasmic; that stretch reads YCKTKKQRRQ…TRAKQDSGPL (418 aa). Disordered stretches follow at residues 469-488, 516-553, 671-690, 720-806, and 823-868; these read MCPA…PRLD, TFSG…SESL, LLRH…DMQR, ASPF…DGAL, and LRSD…SGPL. The segment covering 518–530 has biased composition (low complexity); that stretch reads SGSHSCSPSHHCS. A compositionally biased stretch (basic and acidic residues) spans 538–551; sequence HRHESHTWSLERSE. The span at 766–794 shows a compositional bias: low complexity; it reads LNGLAAQRARAARDSLSLSSGSGCGSASA.

The protein belongs to the neuregulin family. In terms of assembly, interacts with ERBB3 and ERBB4. In terms of processing, proteolytic cleavage close to the plasma membrane on the external face leads to the release of the soluble growth factor form. Extensive glycosylation precedes the proteolytic cleavage. As to expression, expressed in most parts of the brain, especially the olfactory bulb and cerebellum where it localizes in granule and Purkinje cells. In the hippocampus, found in the granule cells of the dentate gyrus. In the basal forebrain, found in the cholinergic cells. In the hindbrain, weakly detectable in the motor trigeminal nucleus. Not detected in the hypothalamus. Also found in the liver and in the thymus. Not detected in heart, adrenal gland, or testis.

The protein localises to the cell membrane. Its subcellular location is the secreted. Direct ligand for ERBB3 and ERBB4 tyrosine kinase receptors. Concomitantly recruits ERBB1 and ERBB2 coreceptors, resulting in ligand-stimulated tyrosine phosphorylation and activation of the ERBB receptors. May also promote the heterodimerization with the EGF receptor. This Rattus norvegicus (Rat) protein is Pro-neuregulin-2, membrane-bound isoform (Nrg2).